Consider the following 296-residue polypeptide: Short-chain dehydrogenase/reductase ascJ (296 aa).

Positions 28, 66, and 93 each coordinate NADP(+). The active-site Proton donor is the serine 155. Positions 168, 172, and 205 each coordinate NADP(+). Catalysis depends on tyrosine 168, which acts as the Proton acceptor. Catalysis depends on lysine 172, which acts as the Lowers pKa of active site Tyr.

The protein belongs to the short-chain dehydrogenases/reductases (SDR) family.

The catalysed reaction is ascofuranol + A = ascofuranone + AH2. The protein operates within secondary metabolite biosynthesis; terpenoid biosynthesis. In terms of biological role, short-chain dehydrogenase/reductase; part of the asc-2 gene cluster that mediates the biosynthesis of ascofuranone, a strong inhibitor of cyanide-insensitive alternative oxidases and a promising drug candidate against African trypanosomiasis. The first step in the pathway is performed by the non-reducing polyketide synthase ascC that produces orsellinic acid by condensing acetyl-CoA with 3 malonyl-CoA units. Orsellinic acid is then prenylated by the prenyltransferase ascA to yield ilicicolinic acid B. Ilicicolinic acid B is further reduced to ilicicolin B by the reductase ascB. The halogenase ascD then chlorinates ilicicolin B to produce ilicicolin A which is converted to ilicicolin A epoxide by the cytochrome P450 monooxygenase ascE that catalyzes stereoselective epoxidation of the terminal double bond of the prenyl group. Ilicicolin A epoxide is the last common precursor for the biosynthesis of ascofuranone and ascochlorin. The terpene cyclase ascF produces a monocyclic terpene, and the cyclization reaction is proposed to be initiated by protonation of the terminal epoxide of ilicicolin A epoxide to generate a monocyclic tertiarycation, which is followed by a series of hydride and methyl shifts with abstraction of proton, leading to the formation of the (14S,15R,19R)-trimethylcyclohexanone ring structure of ilicicolin C, which is finally reduced to ascochlorin by the dehydrogenase ascG. On the other hand, ilicicolin A epoxide is hydroxylated by the cytochrome P450 monooxygenase ascH, and the resultant product is cyclized by the terpene cyclase ascI to ascofuranol via protonation-initiated epoxide ring opening, which facilitates the 6-endo-tet cyclization to form the tetrahy-drofuran ring. Finally, ascofuranol is oxidized into ascofuranone by ascJ. The chain is Short-chain dehydrogenase/reductase ascJ from Acremonium egyptiacum (Oospora egyptiaca).